Reading from the N-terminus, the 139-residue chain is Large ribosomal subunit protein uL16c (139 aa).

Positions methionine 1–lysine 20 are disordered.

The protein belongs to the universal ribosomal protein uL16 family. As to quaternary structure, part of the 50S ribosomal subunit.

It is found in the plastid. It localises to the chloroplast. The protein is Large ribosomal subunit protein uL16c of Pleurastrum terricola (Filamentous green alga).